A 412-amino-acid chain; its full sequence is MKIYLVGGAVRDALLGLPVKDRDWVVVGSTPQEMLDAGYQQVGRDFPVFLHPQTHEEYALARTERKSGSGYTGFTCYAAPDVTLEDDLKRRDLTINALAQDDNGEIIDPYNGLGDLQNRLLRHVSPAFGEDPLRVLRVARFAARYAHLGFRIADETLTLMREMTHAGELEHLTPERVWKETESALTTRNPQVFFQVLRDCGALRVLFPEIDALFGVPAPARWHPEIDTGIHTLMTLSMAAMLSPQVDVRFATLCHDLGKGLTPPELWPRHHGHGPAGVKLVEQLCQRLRVPNEIRDLARLVAEFHDLIHTFPMLNPKTIVKLFDSIDAWRKPQRVEQLALTSEADVRGRTGFESADYPQGRWLREAWEVAQSVPTKAVVEAGFKGVEIREELTRRRIAAIASWKEQRCPKPD.

The ATP site is built by Gly-8 and Arg-11. CTP contacts are provided by Gly-8 and Arg-11. The Mg(2+) site is built by Asp-21 and Asp-23. ATP contacts are provided by Arg-91, Arg-137, and Arg-140. Residues Arg-91, Arg-137, and Arg-140 each coordinate CTP. Residues 228-329 (TGIHTLMTLS…VKLFDSIDAW (102 aa)) enclose the HD domain.

The protein belongs to the tRNA nucleotidyltransferase/poly(A) polymerase family. Bacterial CCA-adding enzyme type 1 subfamily. In terms of assembly, monomer. Can also form homodimers and oligomers. The cofactor is Mg(2+). Requires Ni(2+) as cofactor.

It catalyses the reaction a tRNA precursor + 2 CTP + ATP = a tRNA with a 3' CCA end + 3 diphosphate. It carries out the reaction a tRNA with a 3' CCA end + 2 CTP + ATP = a tRNA with a 3' CCACCA end + 3 diphosphate. Its function is as follows. Catalyzes the addition and repair of the essential 3'-terminal CCA sequence in tRNAs without using a nucleic acid template. Adds these three nucleotides in the order of C, C, and A to the tRNA nucleotide-73, using CTP and ATP as substrates and producing inorganic pyrophosphate. tRNA 3'-terminal CCA addition is required both for tRNA processing and repair. Also involved in tRNA surveillance by mediating tandem CCA addition to generate a CCACCA at the 3' terminus of unstable tRNAs. While stable tRNAs receive only 3'-terminal CCA, unstable tRNAs are marked with CCACCA and rapidly degraded. The polypeptide is Multifunctional CCA protein (Escherichia coli O139:H28 (strain E24377A / ETEC)).